The primary structure comprises 150 residues: Large ribosomal subunit protein bL9 (150 aa).

It belongs to the bacterial ribosomal protein bL9 family.

In terms of biological role, binds to the 23S rRNA. This chain is Large ribosomal subunit protein bL9, found in Neisseria gonorrhoeae (strain ATCC 700825 / FA 1090).